The following is a 312-amino-acid chain: MNKNKSNKLKGIVVALKANFLIVEIDHKNFKDHSFDQFYGKIRLLCIRRSKLNYQGLFIDVGDIVCVESIDYKNKRAVVSDVEPRQSFLKRPAVANVTLVSICISADEPLFDMEQTSRFLLTAECANIEPLIILTKIDLITKNDLILYINKFKSWGYDCIPVSIHNSQGIDSLIERLRKTKLTVLAGPSGVGKTSLINHLIPTVSLPTSSVSKKLKRGTHTTRHVELFAIGNGSLLADTPGFNRPEIVCEPSDFAFLFPEFRTQLSNSQCKFRNCLHRDEPGCVIDKDLERYPFYRQNLEEMINSPLPYQAG.

The region spanning 86-245 (QSFLKRPAVA…LADTPGFNRP (160 aa)) is the CP-type G domain. GTP-binding positions include 135–138 (TKID) and 187–195 (GPSGVGKTS). 4 residues coordinate Zn(2+): Cys270, Cys275, His277, and Cys283.

It belongs to the TRAFAC class YlqF/YawG GTPase family. RsgA subfamily. In terms of assembly, monomer. Associates with 30S ribosomal subunit, binds 16S rRNA. Requires Zn(2+) as cofactor.

The protein resides in the cytoplasm. In terms of biological role, one of several proteins that assist in the late maturation steps of the functional core of the 30S ribosomal subunit. Helps release RbfA from mature subunits. May play a role in the assembly of ribosomal proteins into the subunit. Circularly permuted GTPase that catalyzes slow GTP hydrolysis, GTPase activity is stimulated by the 30S ribosomal subunit. The polypeptide is Small ribosomal subunit biogenesis GTPase RsgA (Prochlorococcus marinus (strain NATL2A)).